Here is a 123-residue protein sequence, read N- to C-terminus: Small ribosomal subunit protein uS12cz/uS12cy (123 aa).

Belongs to the universal ribosomal protein uS12 family. In terms of assembly, part of the 30S ribosomal subunit.

The protein localises to the plastid. Its subcellular location is the chloroplast. In terms of biological role, with S4 and S5 plays an important role in translational accuracy. Located at the interface of the 30S and 50S subunits. In Daucus carota (Wild carrot), this protein is Small ribosomal subunit protein uS12cz/uS12cy (rps12-A).